The following is a 302-amino-acid chain: Ectoine dioxygenase (302 aa).

Gln-128 serves as a coordination point for L-ectoine. 2-oxoglutarate is bound at residue Lys-134. The Fe cation site is built by His-145, Asp-147, and His-246.

Belongs to the PhyH family. EctD subfamily. As to quaternary structure, homodimer. The cofactor is Fe(2+).

The catalysed reaction is L-ectoine + 2-oxoglutarate + O2 = 5-hydroxyectoine + succinate + CO2. Involved in the biosynthesis of 5-hydroxyectoine, called compatible solute, which helps organisms to survive extreme osmotic stress by acting as a highly soluble organic osmolyte. Catalyzes the 2-oxoglutarate-dependent selective hydroxylation of L-ectoine to yield (4S,5S)-5-hydroxyectoine. In Stutzerimonas stutzeri (strain A1501) (Pseudomonas stutzeri), this protein is Ectoine dioxygenase.